A 445-amino-acid chain; its full sequence is Exodeoxyribonuclease 7 large subunit (445 aa).

It belongs to the XseA family. As to quaternary structure, heterooligomer composed of large and small subunits.

The protein localises to the cytoplasm. The catalysed reaction is Exonucleolytic cleavage in either 5'- to 3'- or 3'- to 5'-direction to yield nucleoside 5'-phosphates.. Functionally, bidirectionally degrades single-stranded DNA into large acid-insoluble oligonucleotides, which are then degraded further into small acid-soluble oligonucleotides. This is Exodeoxyribonuclease 7 large subunit from Pasteurella multocida (strain Pm70).